The primary structure comprises 141 residues: Transcription antitermination protein NusB (141 aa).

The protein belongs to the NusB family.

Functionally, involved in transcription antitermination. Required for transcription of ribosomal RNA (rRNA) genes. Binds specifically to the boxA antiterminator sequence of the ribosomal RNA (rrn) operons. The sequence is that of Transcription antitermination protein NusB from Fervidobacterium nodosum (strain ATCC 35602 / DSM 5306 / Rt17-B1).